The following is an 89-amino-acid chain: Small ribosomal subunit protein uS15 (89 aa).

Belongs to the universal ribosomal protein uS15 family. As to quaternary structure, part of the 30S ribosomal subunit. Forms a bridge to the 50S subunit in the 70S ribosome, contacting the 23S rRNA.

In terms of biological role, one of the primary rRNA binding proteins, it binds directly to 16S rRNA where it helps nucleate assembly of the platform of the 30S subunit by binding and bridging several RNA helices of the 16S rRNA. Its function is as follows. Forms an intersubunit bridge (bridge B4) with the 23S rRNA of the 50S subunit in the ribosome. This is Small ribosomal subunit protein uS15 from Carboxydothermus hydrogenoformans (strain ATCC BAA-161 / DSM 6008 / Z-2901).